We begin with the raw amino-acid sequence, 348 residues long: Holliday junction branch migration complex subunit RuvB (348 aa).

Residues 1–182 (MRIELLNTPA…FGINSRFDYY (182 aa)) are large ATPase domain (RuvB-L). ATP is bound by residues I21, R22, G63, K66, T67, T68, 129–131 (EDF), R172, Y182, and R219. T67 serves as a coordination point for Mg(2+). Positions 183–253 (SADLLEKIII…IAMTTLDCLE (71 aa)) are small ATPAse domain (RuvB-S). The head domain (RuvB-H) stretch occupies residues 256–348 (EEGLDDMDKK…EFPLEDDQRQ (93 aa)). Residues R311 and R316 each coordinate DNA.

It belongs to the RuvB family. As to quaternary structure, homohexamer. Forms an RuvA(8)-RuvB(12)-Holliday junction (HJ) complex. HJ DNA is sandwiched between 2 RuvA tetramers; dsDNA enters through RuvA and exits via RuvB. An RuvB hexamer assembles on each DNA strand where it exits the tetramer. Each RuvB hexamer is contacted by two RuvA subunits (via domain III) on 2 adjacent RuvB subunits; this complex drives branch migration. In the full resolvosome a probable DNA-RuvA(4)-RuvB(12)-RuvC(2) complex forms which resolves the HJ.

The protein localises to the cytoplasm. The enzyme catalyses ATP + H2O = ADP + phosphate + H(+). The RuvA-RuvB-RuvC complex processes Holliday junction (HJ) DNA during genetic recombination and DNA repair, while the RuvA-RuvB complex plays an important role in the rescue of blocked DNA replication forks via replication fork reversal (RFR). RuvA specifically binds to HJ cruciform DNA, conferring on it an open structure. The RuvB hexamer acts as an ATP-dependent pump, pulling dsDNA into and through the RuvAB complex. RuvB forms 2 homohexamers on either side of HJ DNA bound by 1 or 2 RuvA tetramers; 4 subunits per hexamer contact DNA at a time. Coordinated motions by a converter formed by DNA-disengaged RuvB subunits stimulates ATP hydrolysis and nucleotide exchange. Immobilization of the converter enables RuvB to convert the ATP-contained energy into a lever motion, pulling 2 nucleotides of DNA out of the RuvA tetramer per ATP hydrolyzed, thus driving DNA branch migration. The RuvB motors rotate together with the DNA substrate, which together with the progressing nucleotide cycle form the mechanistic basis for DNA recombination by continuous HJ branch migration. Branch migration allows RuvC to scan DNA until it finds its consensus sequence, where it cleaves and resolves cruciform DNA. The protein is Holliday junction branch migration complex subunit RuvB of Chlorobium limicola (strain DSM 245 / NBRC 103803 / 6330).